Consider the following 753-residue polypeptide: Putative cyclic nucleotide-gated ion channel 8 (753 aa).

Residues 1 to 111 (MYKSQYISGH…DKTLLLWNRM (111 aa)) are Cytoplasmic-facing. Residues 112-132 (FVISCILAVSVDPLFFYLPIV) traverse the membrane as a helical segment. At 133-145 (DNSKNCIGIDSKL) the chain is on the extracellular side. Residues 146-166 (AVTTTTLRTIIDVFYLTRMAL) form a helical membrane-spanning segment. The Cytoplasmic segment spans residues 167–199 (QFRTAYIAPSSRVFGRGELVIDPAKIAERYLTR). The chain crosses the membrane as a helical span at residues 200–220 (YFIVDFLAVLPLPQIAVWKFL). Over 221–233 (HGSKGTDVLPTKQ) the chain is Extracellular. Residues 234-254 (ALLHIVITQYIPRFVRFIPLT) form a helical membrane-spanning segment. At 255 to 274 (SELKKTAGAFAEGAWAGAAY) the chain is on the cytoplasmic side. A helical membrane pass occupies residues 275-295 (YLLWYMLASHITGAFWYMLSV). Over 296–402 (ERNDTCLRSA…QGLQTSTYPG (107 aa)) the chain is Extracellular. A helical transmembrane segment spans residues 403-423 (EVLFSIAIAVAGLLLFALLIG). At 424-753 (NMQTYLQSLT…FEALDTDDLN (330 aa)) the chain is on the cytoplasmic side. A nucleoside 3',5'-cyclic phosphate is bound by residues 508–638 (LFAN…TFRF) and E579. The tract at residues 624 to 639 (FRRLHSRQVQQTFRFY) is calmodulin-binding. The IQ domain occupies 644–673 (RTWAACFIQAAWRRHLRRKIAELRRKEEEE). The interval 731 to 753 (KSLMNLTKPSEPDFEALDTDDLN) is disordered. Acidic residues predominate over residues 742 to 753 (PDFEALDTDDLN).

This sequence belongs to the cyclic nucleotide-gated cation channel (TC 1.A.1.5) family. In terms of assembly, homotetramer or heterotetramer.

It localises to the cell membrane. Putative cyclic nucleotide-gated ion channel. The polypeptide is Putative cyclic nucleotide-gated ion channel 8 (CNGC8) (Arabidopsis thaliana (Mouse-ear cress)).